Reading from the N-terminus, the 165-residue chain is REP-associated tyrosine transposase (165 aa).

This sequence belongs to the transposase 17 family. RAYT subfamily. Monomer.

Its activity is regulated as follows. Cleavage occurs in the presence of magnesium, but is much more pronounced with manganese. Functionally, transposase that is always flanked by repeated extragenic palindrome (REP) sequences, which are clustered in structures called bacterial interspersed mosaic elements (BIMEs). RayT catalyzes cleavage and recombination of BIMEs. Binds REP sequences and cleaves BIMEs both upstream and downstream of the REP sequence. Could be important in the creation of BIME variability and amplification. In Escherichia coli (strain K12), this protein is REP-associated tyrosine transposase.